The sequence spans 300 residues: Bifunctional protein FolD 1 (300 aa).

NADP(+) is bound by residues 166–168 (GRS), S191, and I232.

Belongs to the tetrahydrofolate dehydrogenase/cyclohydrolase family. As to quaternary structure, homodimer.

It carries out the reaction (6R)-5,10-methylene-5,6,7,8-tetrahydrofolate + NADP(+) = (6R)-5,10-methenyltetrahydrofolate + NADPH. The catalysed reaction is (6R)-5,10-methenyltetrahydrofolate + H2O = (6R)-10-formyltetrahydrofolate + H(+). Its pathway is one-carbon metabolism; tetrahydrofolate interconversion. In terms of biological role, catalyzes the oxidation of 5,10-methylenetetrahydrofolate to 5,10-methenyltetrahydrofolate and then the hydrolysis of 5,10-methenyltetrahydrofolate to 10-formyltetrahydrofolate. This chain is Bifunctional protein FolD 1, found in Roseobacter denitrificans (strain ATCC 33942 / OCh 114) (Erythrobacter sp. (strain OCh 114)).